A 168-amino-acid chain; its full sequence is Peptidoglycan-associated lipoprotein (168 aa).

The first 21 residues, 1–21 (MEMLKFGKFAALALAMAVAVG), serve as a signal peptide directing secretion. Cys22 carries the N-palmitoyl cysteine lipid modification. Residue Cys22 is the site of S-diacylglycerol cysteine attachment. The 113-residue stretch at 56 to 168 (SDEAALRAIT…AQNRRVELKK (113 aa)) folds into the OmpA-like domain. Residues 147–168 (RPVATGHDEQSWAQNRRVELKK) are disordered.

It belongs to the Pal lipoprotein family. The Tol-Pal system is composed of five core proteins: the inner membrane proteins TolA, TolQ and TolR, the periplasmic protein TolB and the outer membrane protein Pal. They form a network linking the inner and outer membranes and the peptidoglycan layer.

It is found in the cell outer membrane. Functionally, part of the Tol-Pal system, which plays a role in outer membrane invagination during cell division and is important for maintaining outer membrane integrity. The polypeptide is Peptidoglycan-associated lipoprotein (Pseudomonas aeruginosa (strain ATCC 15692 / DSM 22644 / CIP 104116 / JCM 14847 / LMG 12228 / 1C / PRS 101 / PAO1)).